We begin with the raw amino-acid sequence, 219 residues long: Small ribosomal subunit protein uS3 (219 aa).

The KH type-2 domain occupies 39–107 (LRKFLKKKLH…EVLIDIQEVR (69 aa)).

The protein belongs to the universal ribosomal protein uS3 family. As to quaternary structure, part of the 30S ribosomal subunit. Forms a tight complex with proteins S10 and S14.

Its function is as follows. Binds the lower part of the 30S subunit head. Binds mRNA in the 70S ribosome, positioning it for translation. This is Small ribosomal subunit protein uS3 from Desulfatibacillum aliphaticivorans.